A 75-amino-acid polypeptide reads, in one-letter code: Large ribosomal subunit protein bL31 (75 aa).

It belongs to the bacterial ribosomal protein bL31 family. Type A subfamily. As to quaternary structure, part of the 50S ribosomal subunit.

Functionally, binds the 23S rRNA. This is Large ribosomal subunit protein bL31 from Nitrobacter winogradskyi (strain ATCC 25391 / DSM 10237 / CIP 104748 / NCIMB 11846 / Nb-255).